A 299-amino-acid polypeptide reads, in one-letter code: Centriolar and ciliogenesis-associated protein HYLS1 (299 aa).

At S179 the chain carries Phosphoserine.

The protein belongs to the HYLS1 family.

Its subcellular location is the cytoplasm. It localises to the cell projection. It is found in the cilium. The protein resides in the cytoskeleton. The protein localises to the microtubule organizing center. Its subcellular location is the centrosome. It localises to the centriole. Plays a role in ciliogenesis. This is Centriolar and ciliogenesis-associated protein HYLS1 from Homo sapiens (Human).